Consider the following 142-residue polypeptide: Large ribosomal subunit protein uL13 (142 aa).

It belongs to the universal ribosomal protein uL13 family. In terms of assembly, part of the 50S ribosomal subunit.

This protein is one of the early assembly proteins of the 50S ribosomal subunit, although it is not seen to bind rRNA by itself. It is important during the early stages of 50S assembly. This is Large ribosomal subunit protein uL13 from Vibrio vulnificus (strain CMCP6).